Reading from the N-terminus, the 448-residue chain is Glutamyl-tRNA reductase (448 aa).

Substrate contacts are provided by residues 49 to 52, Ser109, 114 to 116, and Gln120; these read TCNR and ETQ. Cys50 functions as the Nucleophile in the catalytic mechanism. Residue 189–194 coordinates NADP(+); it reads GAGEMS.

The protein belongs to the glutamyl-tRNA reductase family. In terms of assembly, homodimer.

It carries out the reaction (S)-4-amino-5-oxopentanoate + tRNA(Glu) + NADP(+) = L-glutamyl-tRNA(Glu) + NADPH + H(+). It functions in the pathway porphyrin-containing compound metabolism; protoporphyrin-IX biosynthesis; 5-aminolevulinate from L-glutamyl-tRNA(Glu): step 1/2. Its function is as follows. Catalyzes the NADPH-dependent reduction of glutamyl-tRNA(Glu) to glutamate 1-semialdehyde (GSA). The sequence is that of Glutamyl-tRNA reductase from Staphylococcus aureus (strain NCTC 8325 / PS 47).